The following is a 378-amino-acid chain: Glutamate 5-kinase (378 aa).

Position 14 (K14) interacts with ATP. The substrate site is built by S54, D141, and N153. 173 to 174 (SD) contributes to the ATP binding site. A PUA domain is found at 279–356 (AGRLTVDAGA…DEISEILGYD (78 aa)).

This sequence belongs to the glutamate 5-kinase family.

The protein resides in the cytoplasm. The enzyme catalyses L-glutamate + ATP = L-glutamyl 5-phosphate + ADP. Its pathway is amino-acid biosynthesis; L-proline biosynthesis; L-glutamate 5-semialdehyde from L-glutamate: step 1/2. Catalyzes the transfer of a phosphate group to glutamate to form L-glutamate 5-phosphate. The polypeptide is Glutamate 5-kinase (Brucella anthropi (strain ATCC 49188 / DSM 6882 / CCUG 24695 / JCM 21032 / LMG 3331 / NBRC 15819 / NCTC 12168 / Alc 37) (Ochrobactrum anthropi)).